We begin with the raw amino-acid sequence, 309 residues long: ADP,ATP carrier protein 1 (309 aa).

3 Solcar repeats span residues 11 to 104 (SHFG…IKSL), 116 to 208 (KWFA…FKPV), and 216 to 302 (GSFV…LQLI). Transmembrane regions (helical) follow at residues 13–40 (FGVD…VKLL), 81–105 (TANV…KSLL), 114–134 (YAKW…LSLL), 184–205 (FVPS…YDSF), and 219–239 (VASF…SYPL). 2 residues coordinate ADP: arginine 86 and lysine 98. Arginine 243 provides a ligand contact to ADP. The tract at residues 243–248 (RRRMMM) is important for transport activity. Residues 243–248 (RRRMMM) carry the Nucleotide carrier signature motif motif. A helical transmembrane segment spans residues 279 to 299 (CGANIFRGVAAAGVISLYDQL).

It belongs to the mitochondrial carrier (TC 2.A.29) family. Monomer.

The protein resides in the mitochondrion inner membrane. The enzyme catalyses ADP(in) + ATP(out) = ADP(out) + ATP(in). Its activity is regulated as follows. The matrix-open state (m-state) is inhibited by the membrane-permeable bongkrekic acid (BKA). The cytoplasmic-open state (c-state) is inhibited by the membrane-impermeable toxic inhibitor carboxyatractyloside (CATR). Functionally, ADP:ATP antiporter that mediates import of ADP into the mitochondrial matrix for ATP synthesis, and export of ATP out to fuel the cell. Cycles between the cytoplasmic-open state (c-state) and the matrix-open state (m-state): operates by the alternating access mechanism with a single substrate-binding site intermittently exposed to either the cytosolic (c-state) or matrix (m-state) side of the inner mitochondrial membrane. The polypeptide is ADP,ATP carrier protein 1 (AAC1) (Saccharomyces cerevisiae (strain ATCC 204508 / S288c) (Baker's yeast)).